We begin with the raw amino-acid sequence, 55 residues long: TGB2 protein (55 aa).

A helical transmembrane segment spans residues 20 to 39 (NAAFAVVLLLSLLIYGSRCL).

The protein belongs to the carlavirus/potexvirus TGB2 protein family.

It is found in the host membrane. Functionally, the three proteins TGB1, TGB2 and TGB3 are required for virus movement. This is TGB2 protein from Potato virus X (strain Xc) (PVX).